Here is a 449-residue protein sequence, read N- to C-terminus: Probable phosphoglucosamine mutase (449 aa).

Ser-96 acts as the Phosphoserine intermediate in catalysis. Positions 96, 233, 235, and 237 each coordinate Mg(2+). Residue Ser-96 is modified to Phosphoserine.

The protein belongs to the phosphohexose mutase family. Mg(2+) is required as a cofactor. Activated by phosphorylation.

The catalysed reaction is alpha-D-glucosamine 1-phosphate = D-glucosamine 6-phosphate. Catalyzes the conversion of glucosamine-6-phosphate to glucosamine-1-phosphate. The polypeptide is Probable phosphoglucosamine mutase (Thermococcus gammatolerans (strain DSM 15229 / JCM 11827 / EJ3)).